Reading from the N-terminus, the 220-residue chain is Elongation factor Ts, chloroplastic (220 aa).

Belongs to the EF-Ts family.

It is found in the plastid. It localises to the chloroplast. Functionally, associates with the EF-Tu.GDP complex and induces the exchange of GDP to GTP. It remains bound to the aminoacyl-tRNA.EF-Tu.GTP complex up to the GTP hydrolysis stage on the ribosome. This Pyropia yezoensis (Susabi-nori) protein is Elongation factor Ts, chloroplastic (tsf).